Reading from the N-terminus, the 253-residue chain is 5'-nucleotidase SurE (253 aa).

Residues aspartate 8, aspartate 9, serine 39, and asparagine 92 each coordinate a divalent metal cation.

Belongs to the SurE nucleotidase family. A divalent metal cation is required as a cofactor.

The protein resides in the cytoplasm. The catalysed reaction is a ribonucleoside 5'-phosphate + H2O = a ribonucleoside + phosphate. Functionally, nucleotidase that shows phosphatase activity on nucleoside 5'-monophosphates. This Burkholderia pseudomallei (strain 1710b) protein is 5'-nucleotidase SurE.